Here is a 388-residue protein sequence, read N- to C-terminus: tRNA (guanine-N(7)-)-methyltransferase (388 aa).

E129, E154, and D181 together coordinate S-adenosyl-L-methionine. The substrate site is built by K207 and D237.

This sequence belongs to the class I-like SAM-binding methyltransferase superfamily. TrmB family.

The catalysed reaction is guanosine(46) in tRNA + S-adenosyl-L-methionine = N(7)-methylguanosine(46) in tRNA + S-adenosyl-L-homocysteine. Its pathway is tRNA modification; N(7)-methylguanine-tRNA biosynthesis. Functionally, catalyzes the formation of N(7)-methylguanine at position 46 (m7G46) in tRNA. This chain is tRNA (guanine-N(7)-)-methyltransferase, found in Wolinella succinogenes (strain ATCC 29543 / DSM 1740 / CCUG 13145 / JCM 31913 / LMG 7466 / NCTC 11488 / FDC 602W) (Vibrio succinogenes).